The primary structure comprises 513 residues: GMP synthase [glutamine-hydrolyzing] (513 aa).

The 190-residue stretch at 9 to 198 (LILVLDFGSQ…VRRVCNCTGE (190 aa)) folds into the Glutamine amidotransferase type-1 domain. The active-site Nucleophile is the cysteine 86. Catalysis depends on residues histidine 172 and glutamate 174. The GMPS ATP-PPase domain maps to 199-388 (WTMENFIEIE…LGIPEHLVWR (190 aa)). ATP is bound at residue 226–232 (SGGVDSS).

Homodimer.

It catalyses the reaction XMP + L-glutamine + ATP + H2O = GMP + L-glutamate + AMP + diphosphate + 2 H(+). Its pathway is purine metabolism; GMP biosynthesis; GMP from XMP (L-Gln route): step 1/1. Catalyzes the synthesis of GMP from XMP. This chain is GMP synthase [glutamine-hydrolyzing], found in Staphylococcus epidermidis (strain ATCC 12228 / FDA PCI 1200).